Reading from the N-terminus, the 394-residue chain is Argininosuccinate synthase (394 aa).

Residue 8 to 16 (AYSGGLDTS) participates in ATP binding. L-citrulline-binding residues include Y86 and S91. Residue G116 participates in ATP binding. L-aspartate-binding residues include T118, N122, and D123. N122 serves as a coordination point for L-citrulline. 5 residues coordinate L-citrulline: R126, S172, S181, E257, and Y269.

Belongs to the argininosuccinate synthase family. Type 1 subfamily. In terms of assembly, homotetramer.

It is found in the cytoplasm. The catalysed reaction is L-citrulline + L-aspartate + ATP = 2-(N(omega)-L-arginino)succinate + AMP + diphosphate + H(+). It participates in amino-acid biosynthesis; L-arginine biosynthesis; L-arginine from L-ornithine and carbamoyl phosphate: step 2/3. The protein is Argininosuccinate synthase of Methanosarcina mazei (strain ATCC BAA-159 / DSM 3647 / Goe1 / Go1 / JCM 11833 / OCM 88) (Methanosarcina frisia).